The chain runs to 298 residues: Glutamyl-Q tRNA(Asp) synthetase (298 aa).

L-glutamate-binding positions include 9-13 and glutamate 45; that span reads RFAPS. A 'HIGH' region motif is present at residues 12-22; sequence PSPSGELHFGS. Zn(2+) contacts are provided by cysteine 101, cysteine 103, tyrosine 115, and cysteine 119. L-glutamate is bound by residues tyrosine 172 and arginine 190. Positions 228–232 match the 'KMSKS' region motif; sequence KLSKQ. Lysine 231 is a binding site for ATP.

It belongs to the class-I aminoacyl-tRNA synthetase family. GluQ subfamily. The cofactor is Zn(2+).

Its function is as follows. Catalyzes the tRNA-independent activation of glutamate in presence of ATP and the subsequent transfer of glutamate onto a tRNA(Asp). Glutamate is transferred on the 2-amino-5-(4,5-dihydroxy-2-cyclopenten-1-yl) moiety of the queuosine in the wobble position of the QUC anticodon. This is Glutamyl-Q tRNA(Asp) synthetase from Cronobacter sakazakii (strain ATCC BAA-894) (Enterobacter sakazakii).